The chain runs to 151 residues: Small ribosomal subunit protein uS9 (151 aa).

Over residues 1–19 (MTETTPAPQTPAAPAGPAQ) the composition is skewed to low complexity. Disordered regions lie at residues 1-20 (MTET…PAQS) and 121-151 (KAGF…YSKR). The span at 127–136 (RDPRATERKK) shows a compositional bias: basic and acidic residues. Residues 137–151 (YGLKKARKAPQYSKR) show a composition bias toward basic residues.

Belongs to the universal ribosomal protein uS9 family.

This Mycobacterium bovis (strain ATCC BAA-935 / AF2122/97) protein is Small ribosomal subunit protein uS9 (rpsI).